A 115-amino-acid chain; its full sequence is U3-lycotoxin-Ls1a (115 aa).

The N-terminal stretch at Met-1–Ala-20 is a signal peptide. Positions Glu-21–Arg-44 are excised as a propeptide. 4 disulfides stabilise this stretch: Cys-48-Cys-63, Cys-55-Cys-72, Cys-62-Cys-87, and Cys-74-Cys-85.

This sequence belongs to the neurotoxin 19 (CSTX) family. 01 subfamily. As to expression, expressed by the venom gland.

Its subcellular location is the secreted. The chain is U3-lycotoxin-Ls1a from Lycosa singoriensis (Wolf spider).